Consider the following 725-residue polypeptide: Ribonuclease R (725 aa).

In terms of domain architecture, RNB spans 236-559; sequence RKDLRDKLII…QLHRLIKQMV (324 aa). Residues 611–689 form the S1 motif domain; the sequence is GKSLKAQIVS…NLGKVDVVLE (79 aa).

It belongs to the RNR ribonuclease family. RNase R subfamily.

The protein localises to the cytoplasm. The catalysed reaction is Exonucleolytic cleavage in the 3'- to 5'-direction to yield nucleoside 5'-phosphates.. Functionally, 3'-5' exoribonuclease that releases 5'-nucleoside monophosphates and is involved in maturation of structured RNAs. This chain is Ribonuclease R, found in Mycoplasmopsis pulmonis (strain UAB CTIP) (Mycoplasma pulmonis).